Here is a 531-residue protein sequence, read N- to C-terminus: T-complex protein 1 subunit zeta-2 (531 aa).

Belongs to the TCP-1 chaperonin family. As to quaternary structure, component of the chaperonin-containing T-complex (TRiC), a heterooligomeric complex of about 850 to 900 kDa that forms two stacked rings, 12 to 16 nm in diameter. As to expression, testis specific.

The protein localises to the cytoplasm. Its function is as follows. Component of the chaperonin-containing T-complex (TRiC), a molecular chaperone complex that assists the folding of proteins upon ATP hydrolysis. The protein is T-complex protein 1 subunit zeta-2 (Cct6b) of Mus musculus (Mouse).